The primary structure comprises 193 residues: Probable GTP-binding protein EngB (193 aa).

One can recognise an EngB-type G domain in the interval 20–193; that stretch reads GVPEVAFAGR…ELAHEISRCI (174 aa). GTP-binding positions include 28-35, 55-59, 73-76, 140-143, and 171-176; these read GRSNVGKS, GSTRQ, DLPG, TKAD, and IMWVSS. Mg(2+) is bound by residues S35 and T57.

This sequence belongs to the TRAFAC class TrmE-Era-EngA-EngB-Septin-like GTPase superfamily. EngB GTPase family. Mg(2+) is required as a cofactor.

In terms of biological role, necessary for normal cell division and for the maintenance of normal septation. The sequence is that of Probable GTP-binding protein EngB from Anaplasma phagocytophilum (strain HZ).